A 426-amino-acid chain; its full sequence is Dihydroorotase (426 aa).

The Zn(2+) site is built by histidine 58 and histidine 60. Residues 60–62 (HLR) and asparagine 92 contribute to the substrate site. 3 residues coordinate Zn(2+): aspartate 150, histidine 177, and histidine 230. Position 276 (asparagine 276) interacts with substrate. Aspartate 303 provides a ligand contact to Zn(2+). The active site involves aspartate 303. Substrate-binding positions include histidine 307 and 321–322 (FG).

This sequence belongs to the metallo-dependent hydrolases superfamily. DHOase family. Class I DHOase subfamily. It depends on Zn(2+) as a cofactor.

The catalysed reaction is (S)-dihydroorotate + H2O = N-carbamoyl-L-aspartate + H(+). Its pathway is pyrimidine metabolism; UMP biosynthesis via de novo pathway; (S)-dihydroorotate from bicarbonate: step 3/3. Its function is as follows. Catalyzes the reversible cyclization of carbamoyl aspartate to dihydroorotate. The sequence is that of Dihydroorotase from Listeria monocytogenes serovar 1/2a (strain ATCC BAA-679 / EGD-e).